We begin with the raw amino-acid sequence, 577 residues long: Anthranilate synthase alpha subunit 1, chloroplastic (577 aa).

The N-terminal 34 residues, 1-34 (MASLVLSLRIAPSTPPLGLGGGRFRGRRGAVACR), are a transit peptide targeting the chloroplast.

This sequence belongs to the anthranilate synthase component I family. In terms of assembly, heterotetramer consisting of two non-identical subunits: a beta subunit and a large alpha subunit.

The protein resides in the plastid. It is found in the chloroplast. The catalysed reaction is chorismate + L-glutamine = anthranilate + pyruvate + L-glutamate + H(+). The protein operates within amino-acid biosynthesis; L-tryptophan biosynthesis; L-tryptophan from chorismate: step 1/5. Feedback inhibition by tryptophan. Functionally, part of a heterotetrameric complex that catalyzes the two-step biosynthesis of anthranilate, an intermediate in the biosynthesis of L-tryptophan. In the first step, the glutamine-binding beta subunit of anthranilate synthase (AS) provides the glutamine amidotransferase activity which generates ammonia as a substrate that, along with chorismate, is used in the second step, catalyzed by the large alpha subunit of AS to produce anthranilate. This is Anthranilate synthase alpha subunit 1, chloroplastic (ASA1) from Oryza sativa subsp. indica (Rice).